The chain runs to 559 residues: Malate synthase, glyoxysomal (559 aa).

The Proton acceptor role is filled by Arg173. Residue Asp459 is the Proton donor of the active site. The short motif at 557-559 (CKL) is the Microbody targeting signal element.

Belongs to the malate synthase family.

Its subcellular location is the glyoxysome. The catalysed reaction is glyoxylate + acetyl-CoA + H2O = (S)-malate + CoA + H(+). The protein operates within carbohydrate metabolism; glyoxylate cycle; (S)-malate from isocitrate: step 2/2. This is Malate synthase, glyoxysomal (LIP) from Zea mays (Maize).